A 353-amino-acid polypeptide reads, in one-letter code: Histidinol-phosphate aminotransferase (353 aa).

Lys214 bears the N6-(pyridoxal phosphate)lysine mark.

The protein belongs to the class-II pyridoxal-phosphate-dependent aminotransferase family. Histidinol-phosphate aminotransferase subfamily. In terms of assembly, homodimer. Pyridoxal 5'-phosphate is required as a cofactor.

It carries out the reaction L-histidinol phosphate + 2-oxoglutarate = 3-(imidazol-4-yl)-2-oxopropyl phosphate + L-glutamate. It functions in the pathway amino-acid biosynthesis; L-histidine biosynthesis; L-histidine from 5-phospho-alpha-D-ribose 1-diphosphate: step 7/9. The sequence is that of Histidinol-phosphate aminotransferase from Gloeobacter violaceus (strain ATCC 29082 / PCC 7421).